Here is a 460-residue protein sequence, read N- to C-terminus: Bifunctional protein GlmU (460 aa).

Residues 1–229 (MTNYAIILAA…FNESLGVNDR (229 aa)) form a pyrophosphorylase region. Residues 8-11 (LAAG), Lys-22, Gln-72, and 77-78 (GT) each bind UDP-N-acetyl-alpha-D-glucosamine. Mg(2+) is bound at residue Asp-102. UDP-N-acetyl-alpha-D-glucosamine is bound by residues Gly-139, Glu-154, Asn-169, and Asn-227. Residue Asn-227 coordinates Mg(2+). The linker stretch occupies residues 230 to 250 (VALATAETVMRQRITQKHMVN). The tract at residues 251–460 (GVTFQNPETV…RLAHHPSRSK (210 aa)) is N-acetyltransferase. Residues Arg-332 and Lys-350 each contribute to the UDP-N-acetyl-alpha-D-glucosamine site. The active-site Proton acceptor is the His-362. Positions 365 and 376 each coordinate UDP-N-acetyl-alpha-D-glucosamine. Residues Ala-379, 385–386 (NY), Ser-404, Ala-422, and Arg-439 contribute to the acetyl-CoA site.

It in the N-terminal section; belongs to the N-acetylglucosamine-1-phosphate uridyltransferase family. The protein in the C-terminal section; belongs to the transferase hexapeptide repeat family. In terms of assembly, homotrimer. Mg(2+) is required as a cofactor.

It localises to the cytoplasm. The catalysed reaction is alpha-D-glucosamine 1-phosphate + acetyl-CoA = N-acetyl-alpha-D-glucosamine 1-phosphate + CoA + H(+). It carries out the reaction N-acetyl-alpha-D-glucosamine 1-phosphate + UTP + H(+) = UDP-N-acetyl-alpha-D-glucosamine + diphosphate. The protein operates within nucleotide-sugar biosynthesis; UDP-N-acetyl-alpha-D-glucosamine biosynthesis; N-acetyl-alpha-D-glucosamine 1-phosphate from alpha-D-glucosamine 6-phosphate (route II): step 2/2. It participates in nucleotide-sugar biosynthesis; UDP-N-acetyl-alpha-D-glucosamine biosynthesis; UDP-N-acetyl-alpha-D-glucosamine from N-acetyl-alpha-D-glucosamine 1-phosphate: step 1/1. Its pathway is bacterial outer membrane biogenesis; LPS lipid A biosynthesis. Catalyzes the last two sequential reactions in the de novo biosynthetic pathway for UDP-N-acetylglucosamine (UDP-GlcNAc). The C-terminal domain catalyzes the transfer of acetyl group from acetyl coenzyme A to glucosamine-1-phosphate (GlcN-1-P) to produce N-acetylglucosamine-1-phosphate (GlcNAc-1-P), which is converted into UDP-GlcNAc by the transfer of uridine 5-monophosphate (from uridine 5-triphosphate), a reaction catalyzed by the N-terminal domain. This chain is Bifunctional protein GlmU, found in Streptococcus pyogenes serotype M18 (strain MGAS8232).